We begin with the raw amino-acid sequence, 302 residues long: Lysosomal thioesterase PPT2 (302 aa).

Positions 1-27 (MPGLWRQRLPSAWALLLLPFLPLLMPA) are cleaved as a signal peptide. N60 carries N-linked (GlcNAc...) asparagine glycosylation. Disulfide bonds link C109/C117 and C165/C176. S111 serves as the catalytic Nucleophile. N-linked (GlcNAc...) asparagine glycans are attached at residues N190 and N206. D228 is a catalytic residue. A glycan (N-linked (GlcNAc...) asparagine) is linked at N245. C276 and C296 are disulfide-bonded. Residue H283 is part of the active site. N-linked (GlcNAc...) asparagine glycosylation is present at N289.

The protein belongs to the palmitoyl-protein thioesterase family. As to expression, expressed throughout the brain, primarily in neurons, and at lower levels in glial cells.

The protein resides in the lysosome. It catalyses the reaction hexadecanoyl-CoA + H2O = hexadecanoate + CoA + H(+). The catalysed reaction is S-hexadecanoyl-N-acetylcysteamine + H2O = N-acetylcysteamine + hexadecanoate + H(+). Functionally, catalyzes the cleavage of thioester bonds from S-palmitoyl-CoA or S-palmitoyl-N-acetylcysteamine (unbranched structures) but does not have activity against palmitoylcysteine or palmitoylated proteins, branched structures or bulky head groups. Conversely, hydrolyzes both long and short chain fatty acyl-CoA substrate. The protein is Lysosomal thioesterase PPT2 (Ppt2) of Mus musculus (Mouse).